The following is a 247-amino-acid chain: Oil body-associated protein 2B (247 aa).

Residues 1 to 28 (MASSDKVPVACPASSGDGKEPMGNPTKT) are disordered.

This sequence belongs to the OBAP family.

The sequence is that of Oil body-associated protein 2B from Arabidopsis thaliana (Mouse-ear cress).